Reading from the N-terminus, the 56-residue chain is Conotoxin Cal6.41c (56 aa).

An N-terminal signal peptide occupies residues Met1–Thr23. 3 disulfide bridges follow: Cys27–Cys41, Cys33–Cys50, and Cys40–Cys54.

Expressed by the venom duct.

Its subcellular location is the secreted. Probable neurotoxin. In Californiconus californicus (California cone), this protein is Conotoxin Cal6.41c.